The primary structure comprises 520 residues: Solute carrier family 2, facilitated glucose transporter member 14 (520 aa).

At 1–29 (MEFHNGGHVSGIGGFLVSLTSRMKPHTLA) the chain is on the cytoplasmic side. Residues 30 to 50 (VTPALIFAITVATIGSFQFGY) form a helical membrane-spanning segment. Residues 51–88 (NTGVINAPETIIKEFINKTLTDKANAPPSEVLLTNLWS) are Extracellular-facing. Asn67 carries an N-linked (GlcNAc...) asparagine glycan. The helical transmembrane segment at 89–109 (LSVAIFSVGGMIGSFSVGLFV) threads the bilayer. The Cytoplasmic portion of the chain corresponds to 110-117 (NRFGRRNS). A helical transmembrane segment spans residues 118-138 (MLIVNLLAATGGCLMGLCKIA). Residues 139-148 (ESVEMLILGR) are Extracellular-facing. A helical membrane pass occupies residues 149–169 (LVIGLFCGLCTGFVPMYIGEI). Topologically, residues 170 to 177 (SPTALRGA) are cytoplasmic. A helical membrane pass occupies residues 178–198 (FGTLNQLGIVIGILVAQIFGL). Residue Gln183 participates in D-glucose binding. Over 199–207 (ELILGSEEL) the chain is Extracellular. The chain crosses the membrane as a helical span at residues 208-228 (WPVLLGFTILPAILQSAALPC). Topologically, residues 229 to 293 (CPESPRFLLI…LFRVSSYRQP (65 aa)) are cytoplasmic. A helical membrane pass occupies residues 294–314 (IIISIVLQLSQQLSGINAVFY). D-glucose is bound by residues 304 to 305 (QQ) and Asn310. At 315 to 328 (YSTGIFKDAGVQQP) the chain is on the extracellular side. A helical transmembrane segment spans residues 329 to 349 (IYATISAGVVNTIFTLLSLFL). Asn339 lines the D-glucose pocket. Over 350–358 (VERAGRRTL) the chain is Cytoplasmic. Residues 359–379 (HMIGLGGMAFCSTLMTVSLLL) traverse the membrane as a helical segment. Topologically, residues 380–392 (KNHYNGMSFVCIG) are extracellular. Residues 393 to 413 (AILVFVACFEIGPGPIPWFIV) form a helical membrane-spanning segment. Residues Glu402 and Trp410 each contribute to the D-glucose site. Over 414 to 423 (AELFSQGPRP) the chain is Cytoplasmic. A helical transmembrane segment spans residues 424-444 (AAMAVAGCSNWTSNFLVGLLF). Over 445 to 451 (PSAAYYL) the chain is Extracellular. The chain crosses the membrane as a helical span at residues 452–472 (GAYVFIIFTGFLITFLAFTFF). The Cytoplasmic segment spans residues 473–520 (KVPETRGRTFEDITRAFEGQAHGADRSGKDGVMGMNSIEPAKETTTNV). The disordered stretch occupies residues 493–520 (AHGADRSGKDGVMGMNSIEPAKETTTNV).

It belongs to the major facilitator superfamily. Sugar transporter (TC 2.A.1.1) family. Glucose transporter subfamily. Mainly expressed in testis. Also expressed in small intestine, liver and kidney.

The protein localises to the cell membrane. The catalysed reaction is D-glucose(out) = D-glucose(in). The enzyme catalyses L-dehydroascorbate(out) = L-dehydroascorbate(in). Functionally, hexose transporter that can mediate the transport of glucose and dehydroascorbate across the cell membrane. The protein is Solute carrier family 2, facilitated glucose transporter member 14 of Homo sapiens (Human).